A 541-amino-acid polypeptide reads, in one-letter code: Arginine--tRNA ligase (541 aa).

Residues 119 to 129 (ANPTGPLHIGH) carry the 'HIGH' region motif.

This sequence belongs to the class-I aminoacyl-tRNA synthetase family. Monomer.

It is found in the cytoplasm. The enzyme catalyses tRNA(Arg) + L-arginine + ATP = L-arginyl-tRNA(Arg) + AMP + diphosphate. In Helicobacter pylori (strain P12), this protein is Arginine--tRNA ligase.